The primary structure comprises 437 residues: Adenylosuccinate synthetase (437 aa).

GTP contacts are provided by residues 12–18 and 40–42; these read GDEGKGK and GHT. Aspartate 13 acts as the Proton acceptor in catalysis. Mg(2+) contacts are provided by aspartate 13 and glycine 40. IMP contacts are provided by residues 13–16, 38–41, threonine 128, arginine 142, glutamine 223, threonine 238, and arginine 302; these read DEGK and NAGH. Histidine 41 acts as the Proton donor in catalysis. 298–304 is a binding site for substrate; it reads TTTGRRR. Residues arginine 304, 330 to 332, and 412 to 414 each bind GTP; these read KLD and SLG.

The protein belongs to the adenylosuccinate synthetase family. In terms of assembly, homodimer. Mg(2+) serves as cofactor.

It is found in the cytoplasm. The catalysed reaction is IMP + L-aspartate + GTP = N(6)-(1,2-dicarboxyethyl)-AMP + GDP + phosphate + 2 H(+). It functions in the pathway purine metabolism; AMP biosynthesis via de novo pathway; AMP from IMP: step 1/2. Plays an important role in the de novo pathway of purine nucleotide biosynthesis. Catalyzes the first committed step in the biosynthesis of AMP from IMP. The sequence is that of Adenylosuccinate synthetase from Prochlorococcus marinus (strain NATL1A).